The sequence spans 228 residues: 2-C-methyl-D-erythritol 4-phosphate cytidylyltransferase (228 aa).

Belongs to the IspD/TarI cytidylyltransferase family. IspD subfamily.

It catalyses the reaction 2-C-methyl-D-erythritol 4-phosphate + CTP + H(+) = 4-CDP-2-C-methyl-D-erythritol + diphosphate. It participates in isoprenoid biosynthesis; isopentenyl diphosphate biosynthesis via DXP pathway; isopentenyl diphosphate from 1-deoxy-D-xylulose 5-phosphate: step 2/6. In terms of biological role, catalyzes the formation of 4-diphosphocytidyl-2-C-methyl-D-erythritol from CTP and 2-C-methyl-D-erythritol 4-phosphate (MEP). The polypeptide is 2-C-methyl-D-erythritol 4-phosphate cytidylyltransferase (Geobacillus thermodenitrificans (strain NG80-2)).